The following is a 290-amino-acid chain: Ribosomal RNA small subunit methyltransferase A (290 aa).

The S-adenosyl-L-methionine site is built by N27, L29, G54, E75, D100, and N125.

Belongs to the class I-like SAM-binding methyltransferase superfamily. rRNA adenine N(6)-methyltransferase family. RsmA subfamily.

The protein resides in the cytoplasm. It catalyses the reaction adenosine(1518)/adenosine(1519) in 16S rRNA + 4 S-adenosyl-L-methionine = N(6)-dimethyladenosine(1518)/N(6)-dimethyladenosine(1519) in 16S rRNA + 4 S-adenosyl-L-homocysteine + 4 H(+). Specifically dimethylates two adjacent adenosines (A1518 and A1519) in the loop of a conserved hairpin near the 3'-end of 16S rRNA in the 30S particle. May play a critical role in biogenesis of 30S subunits. This chain is Ribosomal RNA small subunit methyltransferase A, found in Streptococcus gordonii (strain Challis / ATCC 35105 / BCRC 15272 / CH1 / DL1 / V288).